A 129-amino-acid polypeptide reads, in one-letter code: Follitropin subunit beta (129 aa).

The first 20 residues, 1-20, serve as a signal peptide directing secretion; that stretch reads MKSVQFCFLFCCWRAICCRS. 6 disulfides stabilise this stretch: C21–C69, C35–C84, C38–C122, C46–C100, C50–C102, and C105–C112. 2 N-linked (GlcNAc...) asparagine glycosylation sites follow: N25 and N42.

It belongs to the glycoprotein hormones subunit beta family. As to quaternary structure, heterodimer. The active follitropin is a heterodimer composed of an alpha chain/CGA shared with other hormones and a unique beta chain/FSHB shown here.

Its subcellular location is the secreted. Together with the alpha chain CGA constitutes follitropin, the follicle-stimulating hormone, and provides its biological specificity to the hormone heterodimer. Binds FSHR, a G protein-coupled receptor, on target cells to activate downstream signaling pathways. Follitropin is involved in follicle development and spermatogenesis in reproductive organs. The protein is Follitropin subunit beta (FSHB) of Bos taurus (Bovine).